Reading from the N-terminus, the 303-residue chain is MTGIFAEQTVEVVKSAIETADGALDFYNKYLDQVIPWKTFDETIKELSRFKQEYSQEASVLVGDIKVLLMDSQDKYFEATQTVYEWCGVVTQLLSAYILLFDEYNEKKASAQKDILIRILDDGVNKLNEAQKSLLGSSQSFNNASGKLLALDSQLTNDFSEKSSYFQSQVDRIRKEAYAGAAAGIVAGPFGLIISYSIAAGVIEGKLIPELNDRLKAVQNFFTSLSVTVKQANKDIDAAKLKLATEIAAIGEIKTETETTRFYVDYDDLMLSLLKGAAKKMINTCNEYQQRHGKKTLLEVPDI.

Cys-87 and Cys-285 are joined by a disulfide. A helical transmembrane segment spans residues 179–199; sequence AGAAAGIVAGPFGLIISYSIA.

This sequence belongs to the hemolysin E family. Monomer and oligomer. In periplasm, it is present as a monomer, while in outer membrane vesicles, it oligomerizes to form a pore structure that is active. The pore is formed by a dodecamer. Post-translationally, in periplasm, it forms a disulfide bond, which prevents the oligomerization. In outer membrane vesicles, the redox status prevents formation of the disulfide bond, leading to oligomerization and pore formation.

It is found in the secreted. It localises to the periplasm. The protein resides in the host cell membrane. Its function is as follows. Toxin, which has some hemolytic activity towards mammalian cells. Acts by forming a pore-like structure upon contact with mammalian cells. The protein is Hemolysin E (hlyE) of Salmonella paratyphi A (strain ATCC 9150 / SARB42).